A 162-amino-acid polypeptide reads, in one-letter code: Ubiquitin-fold modifier-conjugating enzyme 1 (162 aa).

Catalysis depends on Cys-115, which acts as the Glycyl thioester intermediate.

It belongs to the ubiquitin-conjugating enzyme family. UFC1 subfamily. As to quaternary structure, interacts with uba-5.

Its function is as follows. E2-like enzyme which forms an intermediate with ufm-1. The intermediate is formed via a thioester linkage. This Caenorhabditis briggsae protein is Ubiquitin-fold modifier-conjugating enzyme 1.